The following is a 1976-amino-acid chain: Myosin-10 (1976 aa).

Arg-18 carries the post-translational modification Omega-N-methylarginine. The Myosin N-terminal SH3-like domain occupies 31 to 81; sequence TAKKLVWIPSERHGFEAASIKEERGDEVMVELAENGKKAMVNKDDIQKMNP. The Myosin motor domain maps to 85–783; that stretch reads SKVEDMAELT…VLAHLEEERD (699 aa). ATP is bound at residue 178–185; that stretch reads GESGAGKT. At Lys-442 the chain carries N6-acetyllysine. The actin-binding stretch occupies residues 661–683; that stretch reads LTKLMATLRNTNPNFVRCIIPNH. The IQ domain maps to 786–815; it reads ITDIIIFFQAVCRGYLARKAFAKKQQQLSA. Positions 845-1976 form a coiled coil; that stretch reads LQVTRQEEEL…VNDTQPPQSE (1132 aa). Residues 1125–1175 are disordered; sequence EDFESEKASRNKAEKQKRDLSEELEALKTELEDTLDTTAAQQELRTKREQE. Over residues 1129 to 1155 the composition is skewed to basic and acidic residues; it reads SEKASRNKAEKQKRDLSEELEALKTEL. Ser-1145 bears the Phosphoserine mark. Lys-1241, Lys-1301, and Lys-1645 each carry N6-acetyllysine. 2 disordered regions span residues 1697 to 1718 and 1874 to 1976; these read ASSERARRHAEQERDELADEIA and KANA…PQSE. Basic and acidic residues predominate over residues 1698–1708; the sequence is SSERARRHAEQ. An Omega-N-methylarginine modification is found at Arg-1930. 4 positions are modified to phosphoserine: Ser-1935, Ser-1937, Ser-1938, and Ser-1939. Arg-1940 is subject to Omega-N-methylarginine. A phosphoserine mark is found at Ser-1952 and Ser-1956. Thr-1960 carries the post-translational modification Phosphothreonine. Polar residues predominate over residues 1967-1976; the sequence is VNDTQPPQSE. Ser-1975 bears the Phosphoserine mark.

It belongs to the TRAFAC class myosin-kinesin ATPase superfamily. Myosin family. As to quaternary structure, myosin is a hexameric protein that consists of 2 heavy chain subunits (MHC), 2 alkali light chain subunits (MLC) and 2 regulatory light chain subunits (MLC-2). Interacts with PLEKHG6. Interacts with ECPAS. Interacts with LARP6. Interacts with MCC. Interacts with KIF26B. Interacts with CFAP95. In terms of processing, phosphorylated by ABL2. In terms of tissue distribution, in newborn kidney, expressed in the mesenchyme and ureteric buds.

The protein resides in the cell projection. Its subcellular location is the lamellipodium. In terms of biological role, involved with LARP6 in the stabilization of type I collagen mRNAs for CO1A1 and CO1A2. During cell spreading, plays an important role in cytoskeleton reorganization, focal contacts formation (in the central part but not the margins of spreading cells), and lamellipodial extension; this function is mechanically antagonized by MYH9. Cellular myosin that appears to play a role in cytokinesis, cell shape, and specialized functions such as secretion and capping. The polypeptide is Myosin-10 (Myh10) (Mus musculus (Mouse)).